The primary structure comprises 347 residues: sn-glycerol-3-phosphate import ATP-binding protein UgpC 1 (347 aa).

Residues 4–234 enclose the ABC transporter domain; sequence IELIDLKKNY…PETVFVAGFI (231 aa). 36 to 43 provides a ligand contact to ATP; it reads GPSGCGKS.

The protein belongs to the ABC transporter superfamily. sn-glycerol-3-phosphate importer (TC 3.A.1.1.3) family. The complex is composed of two ATP-binding proteins (UgpC), two transmembrane proteins (UgpA and UgpE) and a solute-binding protein (UgpB).

It localises to the cell inner membrane. It carries out the reaction sn-glycerol 3-phosphate(out) + ATP + H2O = sn-glycerol 3-phosphate(in) + ADP + phosphate + H(+). In terms of biological role, part of the ABC transporter complex UgpBAEC involved in sn-glycerol-3-phosphate (G3P) import. Responsible for energy coupling to the transport system. This chain is sn-glycerol-3-phosphate import ATP-binding protein UgpC 1, found in Rhizobium etli (strain ATCC 51251 / DSM 11541 / JCM 21823 / NBRC 15573 / CFN 42).